The primary structure comprises 131 residues: Fluoride-specific ion channel FluC (131 aa).

Helical transmembrane passes span 10-30, 36-56, 71-91, and 99-119; these read AAVAIGGALGAVCRYLLSGLV, FPMGTVLVNVLGSFVLGFLTW, LATVGFCGGLTTLSTMAYETV, and VLSILYLTANVVLGIAAVLGG. Residues glycine 78 and threonine 81 each contribute to the Na(+) site.

It belongs to the fluoride channel Fluc/FEX (TC 1.A.43) family.

The protein resides in the cell membrane. It carries out the reaction fluoride(in) = fluoride(out). Na(+) is not transported, but it plays an essential structural role and its presence is essential for fluoride channel function. In terms of biological role, fluoride-specific ion channel. Important for reducing fluoride concentration in the cell, thus reducing its toxicity. This Methanopyrus kandleri (strain AV19 / DSM 6324 / JCM 9639 / NBRC 100938) protein is Fluoride-specific ion channel FluC.